Reading from the N-terminus, the 103-residue chain is N(4)-acetylcytidine amidohydrolase (103 aa).

An ASCH domain is found at Thr-6–Glu-92. Lys-20 serves as the catalytic Proton acceptor. Thr-23 acts as the Nucleophile in catalysis. The active-site Proton donor is the Glu-73.

The protein belongs to the N(4)-acetylcytidine amidohydrolase family.

The catalysed reaction is N(4)-acetylcytidine + H2O = cytidine + acetate + H(+). It catalyses the reaction N(4)-acetyl-2'-deoxycytidine + H2O = 2'-deoxycytidine + acetate + H(+). The enzyme catalyses N(4)-acetylcytosine + H2O = cytosine + acetate + H(+). Catalyzes the hydrolysis of N(4)-acetylcytidine (ac4C). The chain is N(4)-acetylcytidine amidohydrolase from Shewanella sp. (strain MR-7).